The primary structure comprises 333 residues: Flap endonuclease 1 (333 aa).

Residues 1–99 (MGVALREVLT…ETIESRREVR (99 aa)) form an N-domain region. Residues Asp28, Asp81, Glu153, Glu155, Asp174, Asp176, and Asp235 each coordinate Mg(2+). Residues 117 to 256 (EAYKQARASS…TALKIVKKDG (140 aa)) form an I-domain region. The interval 325–333 (GQKTLDRWF) is interaction with PCNA.

Belongs to the XPG/RAD2 endonuclease family. FEN1 subfamily. In terms of assembly, interacts with PCNA. PCNA stimulates the nuclease activity without altering cleavage specificity. Requires Mg(2+) as cofactor.

Its function is as follows. Structure-specific nuclease with 5'-flap endonuclease and 5'-3' exonuclease activities involved in DNA replication and repair. During DNA replication, cleaves the 5'-overhanging flap structure that is generated by displacement synthesis when DNA polymerase encounters the 5'-end of a downstream Okazaki fragment. Binds the unpaired 3'-DNA end and kinks the DNA to facilitate 5' cleavage specificity. Cleaves one nucleotide into the double-stranded DNA from the junction in flap DNA, leaving a nick for ligation. Also involved in the base excision repair (BER) pathway. Acts as a genome stabilization factor that prevents flaps from equilibrating into structures that lead to duplications and deletions. Also possesses 5'-3' exonuclease activity on nicked or gapped double-stranded DNA. This Methanosphaerula palustris (strain ATCC BAA-1556 / DSM 19958 / E1-9c) protein is Flap endonuclease 1.